Consider the following 434-residue polypeptide: Ribosomal protein uS12 methylthiotransferase RimO (434 aa).

Positions 2-112 (AKIGFVSLGC…VLEAVQEVLP (111 aa)) constitute an MTTase N-terminal domain. Cys-11, Cys-47, Cys-76, Cys-142, Cys-146, and Cys-149 together coordinate [4Fe-4S] cluster. The region spanning 128-365 (LTPRHYAYVK…LEVQARVSLR (238 aa)) is the Radical SAM core domain. The TRAM domain maps to 368–434 (QRFVGKTLEV…DTYDLHGVQA (67 aa)).

This sequence belongs to the methylthiotransferase family. RimO subfamily. [4Fe-4S] cluster is required as a cofactor.

Its subcellular location is the cytoplasm. The enzyme catalyses L-aspartate(89)-[ribosomal protein uS12]-hydrogen + (sulfur carrier)-SH + AH2 + 2 S-adenosyl-L-methionine = 3-methylsulfanyl-L-aspartate(89)-[ribosomal protein uS12]-hydrogen + (sulfur carrier)-H + 5'-deoxyadenosine + L-methionine + A + S-adenosyl-L-homocysteine + 2 H(+). In terms of biological role, catalyzes the methylthiolation of an aspartic acid residue of ribosomal protein uS12. This is Ribosomal protein uS12 methylthiotransferase RimO from Thermus thermophilus (strain ATCC BAA-163 / DSM 7039 / HB27).